The chain runs to 195 residues: Heavy metal-associated isoprenylated plant protein 18 (195 aa).

2 disordered regions span residues 36–76 and 145–172; these read DVVQ…KPET and EKEK…NPSS. Composition is skewed to basic and acidic residues over residues 47–76 and 145–157; these read TVTK…KPET and EKEK…ITKD. In terms of domain architecture, HMA spans 78–149; it reads TRKLEIHIAF…RIVKMEKEKK (72 aa). A Cysteine methyl ester modification is found at Cys192. Cys192 is lipidated: S-farnesyl cysteine. Positions 193–195 are cleaved as a propeptide — removed in mature form; it reads SIS.

The protein belongs to the HIPP family.

Its function is as follows. Probable heavy-metal-binding protein. Required for female gametophyte development and function. This is Heavy metal-associated isoprenylated plant protein 18 from Arabidopsis thaliana (Mouse-ear cress).